A 132-amino-acid chain; its full sequence is Protein LH2 (132 aa).

This Pantherophis guttatus (Corn snake) protein is Protein LH2.